Reading from the N-terminus, the 262-residue chain is Adenosylcobinamide-GDP ribazoletransferase (262 aa).

The next 7 membrane-spanning stretches (helical) occupy residues 37–57, 58–78, 112–132, 139–159, 183–203, 205–225, and 237–257; these read SMPLAGAAIGALAAGTYALCS, MFSFGTPLFLALFLLWLGIWL, VGAFAVLSLACLLSFRWLFLY, IPPALFVAIPLLSRSGAAWLL, AVWALVLAFLALSLLLVFGGV, VWTSAALAVAMALLALGAKPW, and VLGALIEGGETLLWGVVWLLH.

This sequence belongs to the CobS family. Requires Mg(2+) as cofactor.

It is found in the cell membrane. The enzyme catalyses alpha-ribazole + adenosylcob(III)inamide-GDP = adenosylcob(III)alamin + GMP + H(+). It carries out the reaction alpha-ribazole 5'-phosphate + adenosylcob(III)inamide-GDP = adenosylcob(III)alamin 5'-phosphate + GMP + H(+). Its pathway is cofactor biosynthesis; adenosylcobalamin biosynthesis; adenosylcobalamin from cob(II)yrinate a,c-diamide: step 7/7. Functionally, joins adenosylcobinamide-GDP and alpha-ribazole to generate adenosylcobalamin (Ado-cobalamin). Also synthesizes adenosylcobalamin 5'-phosphate from adenosylcobinamide-GDP and alpha-ribazole 5'-phosphate. The polypeptide is Adenosylcobinamide-GDP ribazoletransferase (Geobacillus thermodenitrificans (strain NG80-2)).